The sequence spans 157 residues: Phosphopantetheine adenylyltransferase (157 aa).

Position 8 (Ser8) interacts with substrate. ATP-binding positions include 8-9 (SF) and His16. Lys40, Thr72, and Arg86 together coordinate substrate. ATP is bound by residues 87–89 (GLR), Glu97, and 122–128 (YSFLSSS).

It belongs to the bacterial CoaD family. As to quaternary structure, homohexamer. It depends on Mg(2+) as a cofactor.

It localises to the cytoplasm. The enzyme catalyses (R)-4'-phosphopantetheine + ATP + H(+) = 3'-dephospho-CoA + diphosphate. The protein operates within cofactor biosynthesis; coenzyme A biosynthesis; CoA from (R)-pantothenate: step 4/5. Functionally, reversibly transfers an adenylyl group from ATP to 4'-phosphopantetheine, yielding dephospho-CoA (dPCoA) and pyrophosphate. The polypeptide is Phosphopantetheine adenylyltransferase (Crocosphaera subtropica (strain ATCC 51142 / BH68) (Cyanothece sp. (strain ATCC 51142))).